Consider the following 1304-residue polypeptide: MNNEDSLSYSFGRMMLNQQQHHHQQQNNTQVQQQQQQHTTQFNQVRFGGNYHQQHQQQQHHQQQHHQQQQQQQQQQQQQQQHPQQYISPTFSYVHNNSNTSITHGNLYDIDDNQIDNVNIIRGGNRGYYNQQQQQHQHQQQQYYHEQQQQHFNINNNNNNSNNNNNNNNNNNNNNNNNNNNNNNNNNNNNNNSSLITNSHHAQRIVSPIVNGMTSSSGSNMMINDVSFGMNGISSINGISINNGSGDIDEEDDKLLDEQQQLLQRSLERLSDGEEISFGNPNYFFHPFSERNINGLPSTNSSIVSRQQQLQQQQQKLKLKSSPSPISPFFYTQQQQQQQQQQQQQQQQQQQQQQQQQQQQQQQQQQQQNTSINGIIKIDQTPPTPQYIANPSVSPLNAPISSPVLGDIYSGNNNNNNINTNNYRQQQKLNTSTGSYQNMSFDAGVNGFNWSPSLQPDQSTSTNHTQAMLQQQQQRQQQQQQQTQNLVYLNNQQIKSTVTSNRDHWSSVVKPPPIQLQQNSMQQNPIQQQQQQQQQQQQQSLLQHQQMLQMQMQIQQQQQQQQQQQQQQQQQQNQQQNQQQNQQQNQQQNQQHYPNQHHGQHQHNQHNQHHNQHHNQSHPNHKNQHQKQNQTQQSTQQQQQQQQNVQTSTTQSPLLQQSQQPQQQQPPTSNQRQQQQHNNNTNNVTTINNQTNINIINNDSDNEELLTTVNHSKPPPNESKRGELVESPVSKQQYKHFIKQFKLKEKEGLEIAMEFAFQSLSVLPEKVHWRVYLELADLANRQNNLKLARKFYRKVTSTQPYISQGWLEYAKMEEDYGRLEKCQKILQLGLKHCPFNESLLIKGIRHEEKMDNLEGARALLSQLRDQSIYKTWRAVMEGGLLEARAGNIDVARKIFKYLMKHVPWYGPIYQEAYKLEERCEEYERAINIVEKGLFEDPKYGPLWFSALRLYEKTSHGFLQSTRNTVERARQAVSREVTWKIYFEAAQIEERSKNLTLSRAAYVKSVELCPENLLWKVWLGGSRTELNADNICIARKLVFRALEEVPSKLRSLVLLEYSRLEEYAGNINKSRRILKMAHVEARLDWKVFLESVLLEMRANNYEAAIKEAKESLKIHSGAGRLWAALIQLNQLKGVKSQLNVFKKALQFVPKSGEVWCEGARIALNNNELREARRFLEFAIQFTPQFGDSFIELLRLEIMEKGPNCDISKLEQLCINADPNYGFMWLHCTVCVLDSSRQVLRNAKKLLLEMTQPKEQYLEEKKPEYGSCWVGSDGVLSLNRVFRNDFNNMSNQEKRKALFGSDVVKP.

Disordered stretches follow at residues 19–85 (QQHH…HPQQ), 153–195 (NINN…NSSL), 296–334 (LPST…YTQQ), 447–477 (GFNW…QRQQ), 576–687 (QNQQ…VTTI), and 706–728 (LTTV…VESP). Composition is skewed to low complexity over residues 25–44 (QQNN…QFNQ), 52–85 (HQQH…HPQQ), and 153–194 (NINN…NNSS). The span at 296-306 (LPSTNSSIVSR) shows a compositional bias: polar residues. Residues 307–316 (QQQLQQQQQK) show a composition bias toward low complexity. Over residues 448 to 465 (FNWSPSLQPDQSTSTNHT) the composition is skewed to polar residues. 2 stretches are compositionally biased toward low complexity: residues 466 to 477 (QAMLQQQQQRQQ) and 576 to 597 (QNQQ…PNQH). Residues 598 to 625 (HGQHQHNQHNQHHNQHHNQSHPNHKNQH) show a composition bias toward basic residues. The span at 626 to 687 (QKQNQTQQST…NNNTNNVTTI (62 aa)) shows a compositional bias: low complexity. TPR repeat units lie at residues 769–802 (WRVY…QPYI), 899–932 (MKHV…VEKG), 978–1011 (WKIY…CPEN), 1046–1079 (SKLR…AHVE), 1084–1111 (WKVF…KESL), 1112–1150 (KIHS…VPKS), and 1152–1184 (EVWC…TPQF).

This is TPR-containing protein DDB_G0280363 from Dictyostelium discoideum (Social amoeba).